The chain runs to 446 residues: MAERQQSPAAETIPGTPVIREVRTGTGSENFNPENTRRGCLRAEIDISPQLYGGRGFWVPFNLEDNYDCVGEFDIKRMEEQTVELEKDLIMKELETLDLLEALGSTKRIFEDLKWQLQQQALRCKETPQHLRSHSKEMVDEHCHRNPLKSPDLMTMEMKQAGMNLCKTMDDLALIHSYAESLNMKTKEEKDVLGVASLAEELNSLKFKPAGPDQVERFNTENLPVNPQCEQIKMVVETYDTAFHKQSKTCPRTADMRLVAARKMEEAARAAEALALAEMTILSSRRNQDALCFPKTPCFPLTLKAQMNKELSTNVSRIEILRKLEEANEEVKQSKQALEVALNRVEIASVKQLEAEEAFRQWNIESWKDQKAVGAKRSMKRESFPQRSFLSHINQHEPLIDLPEPMLKRNVSMGNALNRKDEKQLVTPRRKFRFIQTHQASIRKTE.

A coiled-coil region spans residues 313–349; that stretch reads TNVSRIEILRKLEEANEEVKQSKQALEVALNRVEIAS.

It belongs to the WEB family.

The polypeptide is WEB family protein At3g56270 (Arabidopsis thaliana (Mouse-ear cress)).